Reading from the N-terminus, the 590-residue chain is O-fucosyltransferase 2 (590 aa).

The segment covering 1-16 (MGQERPNDEERPESRD) has biased composition (basic and acidic residues). The interval 1-26 (MGQERPNDEERPESRDLGVYGCSPPH) is disordered. A helical; Signal-anchor for type II membrane protein transmembrane segment spans residues 67 to 87 (TAIGVMAILGFFCLVNWFMLS). Residue Asn-125 is glycosylated (N-linked (GlcNAc...) asparagine). 365 to 367 (HLR) contributes to the substrate binding site. N-linked (GlcNAc...) asparagine glycans are attached at residues Asn-485 and Asn-546.

Belongs to the glycosyltransferase GT106 family.

The protein resides in the membrane. Its pathway is glycan metabolism. The protein is O-fucosyltransferase 2 of Arabidopsis thaliana (Mouse-ear cress).